We begin with the raw amino-acid sequence, 146 residues long: Hemoglobin subunit beta (146 aa).

The residue at position 1 (Val-1) is an N-acetylvaline. Residues 2–146 form the Globin domain; the sequence is HLTPEEKSAV…VANALAHKYH (145 aa). Thr-12 bears the Phosphothreonine mark. Phosphoserine is present on Ser-44. Lys-59 carries the N6-acetyllysine modification. Heme b is bound at residue His-63. Lys-82 carries the post-translational modification N6-acetyllysine. His-92 contacts heme b. Residue Cys-93 is modified to S-nitrosocysteine. Lys-144 carries the post-translational modification N6-acetyllysine.

It belongs to the globin family. As to quaternary structure, heterotetramer of two alpha chains and two beta chains. In terms of tissue distribution, red blood cells.

Functionally, involved in oxygen transport from the lung to the various peripheral tissues. This chain is Hemoglobin subunit beta (HBB), found in Hylobates lar (Lar gibbon).